A 365-amino-acid chain; its full sequence is Probable secreted beta-glucosidase UTH1 (365 aa).

The first 17 residues, 1 to 17 (MKLSALLALSASTAVLA), serve as a signal peptide directing secretion.

The protein belongs to the SUN family.

The protein resides in the mitochondrion outer membrane. It localises to the secreted. Its subcellular location is the cell wall. Functionally, involved in aging, oxidative stress response, and in the regulation of mitochondrial biogenesis. Inactivation of UTH1 increases life span, leads to higher resistance to heat stress and against hydrogen peroxide, and increases sensitivity to the superoxide radical-generating drug paraquat and to copper. Also required for the selective autophagic degradation of mitochondria (mitophagy) in response to nitrogen starvation. Involved in the remodeling of the cell wall during the various phases of yeast culture development and under various environmental conditions and plays a role in septation. Involved in cell sensitivity to boric acid. This Saccharomyces cerevisiae (strain ATCC 204508 / S288c) (Baker's yeast) protein is Probable secreted beta-glucosidase UTH1 (UTH1).